The following is a 546-amino-acid chain: Chaperonin GroEL (546 aa).

Residues 30-33, K51, 87-91, G415, 479-481, and D495 contribute to the ATP site; these read TLGP, DGTTT, and NAA. Residues 526–546 form a disordered region; sequence KKGDSAPAGGGMGDMGGMGMM. A compositionally biased stretch (gly residues) spans 533-546; that stretch reads AGGGMGDMGGMGMM.

The protein belongs to the chaperonin (HSP60) family. In terms of assembly, forms a cylinder of 14 subunits composed of two heptameric rings stacked back-to-back. Interacts with the co-chaperonin GroES.

The protein resides in the cytoplasm. It carries out the reaction ATP + H2O + a folded polypeptide = ADP + phosphate + an unfolded polypeptide.. Functionally, together with its co-chaperonin GroES, plays an essential role in assisting protein folding. The GroEL-GroES system forms a nano-cage that allows encapsulation of the non-native substrate proteins and provides a physical environment optimized to promote and accelerate protein folding. The protein is Chaperonin GroEL of Thioalkalivibrio sulfidiphilus (strain HL-EbGR7).